Reading from the N-terminus, the 138-residue chain is Photosystem II extrinsic protein U (138 aa).

Residues 1 to 28 (MSRVVSALMGLVLMFGCAFFSVQPQAQA) form the signal peptide. A propeptide spanning residues 29-42 (LDLSNGFVSAAVLG) is cleaved from the precursor.

This sequence belongs to the PsbU family. PSII is composed of 1 copy each of membrane proteins PsbA, PsbB, PsbC, PsbD, PsbE, PsbF, PsbH, PsbI, PsbJ, PsbK, PsbL, PsbM, PsbT, PsbX, PsbY, PsbZ, Psb30/Ycf12, peripheral proteins PsbO, CyanoQ (PsbQ), PsbU, PsbV and a large number of cofactors. It forms dimeric complexes.

It localises to the cellular thylakoid membrane. One of the extrinsic, lumenal subunits of photosystem II (PSII). PSII is a light-driven water plastoquinone oxidoreductase, using light energy to abstract electrons from H(2)O, generating a proton gradient subsequently used for ATP formation. The extrinsic proteins stabilize the structure of photosystem II oxygen-evolving complex (OEC), the ion environment of oxygen evolution and protect the OEC against heat-induced inactivation. The chain is Photosystem II extrinsic protein U from Picosynechococcus sp. (strain ATCC 27264 / PCC 7002 / PR-6) (Agmenellum quadruplicatum).